Here is an 81-residue protein sequence, read N- to C-terminus: UPF0248 protein SSO2687 (81 aa).

It belongs to the UPF0248 family.

The sequence is that of UPF0248 protein SSO2687 from Saccharolobus solfataricus (strain ATCC 35092 / DSM 1617 / JCM 11322 / P2) (Sulfolobus solfataricus).